Consider the following 170-residue polypeptide: CDP-archaeol synthase (170 aa).

5 consecutive transmembrane segments (helical) span residues 6 to 26 (LLWA…PVLV), 53 to 73 (GLIG…FITP), 83 to 103 (LLLA…GSFF), 114 to 134 (PAIG…AYPV), and 140 to 160 (GQII…NYFA).

Belongs to the CDP-archaeol synthase family. It depends on Mg(2+) as a cofactor.

Its subcellular location is the cell membrane. It catalyses the reaction 2,3-bis-O-(geranylgeranyl)-sn-glycerol 1-phosphate + CTP + H(+) = CDP-2,3-bis-O-(geranylgeranyl)-sn-glycerol + diphosphate. It participates in membrane lipid metabolism; glycerophospholipid metabolism. In terms of biological role, catalyzes the formation of CDP-2,3-bis-(O-geranylgeranyl)-sn-glycerol (CDP-archaeol) from 2,3-bis-(O-geranylgeranyl)-sn-glycerol 1-phosphate (DGGGP) and CTP. This reaction is the third ether-bond-formation step in the biosynthesis of archaeal membrane lipids. The polypeptide is CDP-archaeol synthase (Thermococcus onnurineus (strain NA1)).